Reading from the N-terminus, the 388-residue chain is Dual-specificity RNA methyltransferase RlmN (388 aa).

The Proton acceptor role is filled by Glu109. The Radical SAM core domain maps to 115-354 (EDDRATLCVS…TIVRKTRGDD (240 aa)). An intrachain disulfide couples Cys122 to Cys359. Residues Cys129, Cys133, and Cys136 each contribute to the [4Fe-4S] cluster site. Residues 183–184 (GE), Ser215, 237–239 (SLH), and Asn316 contribute to the S-adenosyl-L-methionine site. Catalysis depends on Cys359, which acts as the S-methylcysteine intermediate.

It belongs to the radical SAM superfamily. RlmN family. [4Fe-4S] cluster serves as cofactor.

The protein localises to the cytoplasm. The enzyme catalyses adenosine(2503) in 23S rRNA + 2 reduced [2Fe-2S]-[ferredoxin] + 2 S-adenosyl-L-methionine = 2-methyladenosine(2503) in 23S rRNA + 5'-deoxyadenosine + L-methionine + 2 oxidized [2Fe-2S]-[ferredoxin] + S-adenosyl-L-homocysteine. The catalysed reaction is adenosine(37) in tRNA + 2 reduced [2Fe-2S]-[ferredoxin] + 2 S-adenosyl-L-methionine = 2-methyladenosine(37) in tRNA + 5'-deoxyadenosine + L-methionine + 2 oxidized [2Fe-2S]-[ferredoxin] + S-adenosyl-L-homocysteine. Its function is as follows. Specifically methylates position 2 of adenine 2503 in 23S rRNA and position 2 of adenine 37 in tRNAs. m2A2503 modification seems to play a crucial role in the proofreading step occurring at the peptidyl transferase center and thus would serve to optimize ribosomal fidelity. In Cronobacter sakazakii (strain ATCC BAA-894) (Enterobacter sakazakii), this protein is Dual-specificity RNA methyltransferase RlmN.